Consider the following 370-residue polypeptide: 3-dehydroquinate synthase (370 aa).

Residues 108-112, 132-133, Lys-145, and Lys-154 each bind NAD(+); these read GVIGD and TT. Residues Glu-187, His-249, and His-267 each contribute to the Zn(2+) site.

It belongs to the sugar phosphate cyclases superfamily. Dehydroquinate synthase family. Co(2+) serves as cofactor. The cofactor is Zn(2+). NAD(+) is required as a cofactor.

The protein resides in the cytoplasm. It carries out the reaction 7-phospho-2-dehydro-3-deoxy-D-arabino-heptonate = 3-dehydroquinate + phosphate. Its pathway is metabolic intermediate biosynthesis; chorismate biosynthesis; chorismate from D-erythrose 4-phosphate and phosphoenolpyruvate: step 2/7. Catalyzes the conversion of 3-deoxy-D-arabino-heptulosonate 7-phosphate (DAHP) to dehydroquinate (DHQ). This is 3-dehydroquinate synthase from Cereibacter sphaeroides (strain ATCC 17023 / DSM 158 / JCM 6121 / CCUG 31486 / LMG 2827 / NBRC 12203 / NCIMB 8253 / ATH 2.4.1.) (Rhodobacter sphaeroides).